A 62-amino-acid polypeptide reads, in one-letter code: Mu-elapitoxin-Na1a (62 aa).

Cystine bridges form between cysteine 3–cysteine 22, cysteine 15–cysteine 40, cysteine 44–cysteine 55, and cysteine 56–cysteine 61.

This sequence belongs to the three-finger toxin family. Short-chain subfamily. Orphan group XV sub-subfamily. In terms of tissue distribution, expressed by the venom gland.

Its subcellular location is the secreted. Its function is as follows. Potent inhibitor of human Nav1.8/SCN10A (IC(50)=141-380 nM). Is highly selective for this channel and acts in a reversible manner. Shows a depolarizing shift of activation and hyperpolarizing shift of inactivation. In contrast to the very similar cytotoxin A5 (AC P62375), does not seem to bind integrin alpha-V/beta-3, since it does not promote or inhibit the proliferation of HUVECs and C-PAE cells. In vivo, in rodent models of inflammatory and neuropathic pain, it alleviates nociceptive behaviors more potently than does morphine. It displays no evident cytotoxic, hemolytic and cardiotoxic activities and produces no obvious adverse responses in mice even at a dose 30-fold higher than that producing a significant analgesic effect. The sequence is that of Mu-elapitoxin-Na1a from Naja atra (Chinese cobra).